The following is a 145-amino-acid chain: Maximins 3/H11 type 3 (145 aa).

Positions 1 to 18 are cleaved as a signal peptide; it reads MNFKYIVAVSFLIASAYA. 2 propeptides span residues 19 to 43 and 75 to 122; these read RSVQNDEQSLSQRDVLEEEESLREI and TAEE…TKKE. Position 144 is an isoleucine amide (isoleucine 144).

It belongs to the bombinin family. As to expression, expressed by the skin glands.

The protein localises to the secreted. In terms of biological role, maximin-3 shows antibacterial activity against both Gram-positive and Gram-negative bacteria. It also shows antimicrobial activity against the fungus C.albicans, but not against A.flavus nor P.uticale. It has little hemolytic activity. It possess a significant cytotoxicity against tumor cell lines. It possess a significant anti-HIV activity. It shows high spermicidal activity. Functionally, maximin-H11 shows antimicrobial activity against bacteria and against the fungus C.albicans. Shows strong hemolytic activity. The sequence is that of Maximins 3/H11 type 3 from Bombina maxima (Giant fire-bellied toad).